A 554-amino-acid chain; its full sequence is MNPSTTQARVVVDELIRGGVRDVVLCPGSRNAPLAFALQDADRSGRIRLHVRIDERTAGYLAIGLAIGAGAPVCVAMTSGTAVANLGPAVVEANYARVPLIVLSANRPYELLGTGANQTMEQLGYFGTQVRASISLGLAEDAPERTSALNATWRSATCRVLAAATGARTANAGPVHFDIPLREPLVPDPEPLGAVTPPGRPAGKPWTYTPPVTFDQPLDIDLSVDTVVISGHGAGVHPNLAALPTVAEPTAPRSGDNPLHPLALPLLRPQQVIMLGRPTLHRPVSVLLADAEVPVFALTTGPRWPDVSGNSQATGTRAVTTGAPRPAWLDRCAAMNRHAIAAVREQLAAHPLTTGLHVAAAVSHALRPGDQLVLGASNPVRDVALAGLDTRGIRVRSNRGVAGIDGTVSTAIGAALAYEGAHERTGSPDSPPRTIALIGDLTFVHDSSGLLIGPTEPIPRSLTIVVSNDNGGGIFELLEQGDPRFSDVSSRIFGTPHDVDVGALCRAYHVESRQIEVDELGPTLDQPGAGMRVLEVKADRSSLRQLHAAIKAAL.

This sequence belongs to the TPP enzyme family. MenD subfamily. As to quaternary structure, homodimer. Mg(2+) is required as a cofactor. It depends on Mn(2+) as a cofactor. The cofactor is thiamine diphosphate.

It catalyses the reaction isochorismate + 2-oxoglutarate + H(+) = 5-enolpyruvoyl-6-hydroxy-2-succinyl-cyclohex-3-ene-1-carboxylate + CO2. It functions in the pathway quinol/quinone metabolism; 1,4-dihydroxy-2-naphthoate biosynthesis; 1,4-dihydroxy-2-naphthoate from chorismate: step 2/7. Its pathway is quinol/quinone metabolism; menaquinone biosynthesis. Functionally, catalyzes the thiamine diphosphate-dependent decarboxylation of 2-oxoglutarate and the subsequent addition of the resulting succinic semialdehyde-thiamine pyrophosphate anion to isochorismate to yield 2-succinyl-5-enolpyruvyl-6-hydroxy-3-cyclohexene-1-carboxylate (SEPHCHC). The protein is 2-succinyl-5-enolpyruvyl-6-hydroxy-3-cyclohexene-1-carboxylate synthase of Mycobacterium tuberculosis (strain ATCC 25177 / H37Ra).